We begin with the raw amino-acid sequence, 457 residues long: UDP-N-acetylmuramate--L-alanine ligase (457 aa).

112–118 lines the ATP pocket; it reads GAHGKTS.

It belongs to the MurCDEF family.

It is found in the cytoplasm. It catalyses the reaction UDP-N-acetyl-alpha-D-muramate + L-alanine + ATP = UDP-N-acetyl-alpha-D-muramoyl-L-alanine + ADP + phosphate + H(+). It participates in cell wall biogenesis; peptidoglycan biosynthesis. Its function is as follows. Cell wall formation. This Desulfosudis oleivorans (strain DSM 6200 / JCM 39069 / Hxd3) (Desulfococcus oleovorans) protein is UDP-N-acetylmuramate--L-alanine ligase.